Reading from the N-terminus, the 50-residue chain is Putative protein HokG (50 aa).

Residues 5–25 (YALVAIIVLCCTVLGFTLMVG) traverse the membrane as a helical segment.

This sequence belongs to the Hok/Gef family.

Its subcellular location is the cell inner membrane. Toxic component of a type I toxin-antitoxin (TA) system. When overexpressed kills cells within minutes; causes collapse of the transmembrane potential and arrest of respiration. Its toxic effect is probably neutralized by an antisense antitoxin Sok RNA. The polypeptide is Putative protein HokG (hokG) (Escherichia coli O157:H7).